The following is a 256-amino-acid chain: Small ribosomal subunit protein eS1 (256 aa).

Residues 1–18 show a composition bias toward basic residues; that stretch reads MAVGKNKRLSKGKKGLKK. A disordered region spans residues 1-20; that stretch reads MAVGKNKRLSKGKKGLKKKA. Position 2 is an N-acetylalanine; partial (Ala2).

It belongs to the eukaryotic ribosomal protein eS1 family. As to quaternary structure, component of the small ribosomal subunit. Mature ribosomes consist of a small (40S) and a large (60S) subunit. The 40S subunit contains about 33 different proteins and 1 molecule of RNA (18S). The 60S subunit contains about 49 different proteins and 3 molecules of RNA (25S, 5.8S and 5S).

It localises to the cytoplasm. The chain is Small ribosomal subunit protein eS1 from Podospora anserina (strain S / ATCC MYA-4624 / DSM 980 / FGSC 10383) (Pleurage anserina).